The primary structure comprises 218 residues: Ribosomal RNA small subunit methyltransferase G (218 aa).

S-adenosyl-L-methionine is bound by residues glycine 82, leucine 87, 137–138, and arginine 152; that span reads VE.

Belongs to the methyltransferase superfamily. RNA methyltransferase RsmG family.

It is found in the cytoplasm. It carries out the reaction guanosine(527) in 16S rRNA + S-adenosyl-L-methionine = N(7)-methylguanosine(527) in 16S rRNA + S-adenosyl-L-homocysteine. In terms of biological role, specifically methylates the N7 position of guanine in position 527 of 16S rRNA. The polypeptide is Ribosomal RNA small subunit methyltransferase G (Herminiimonas arsenicoxydans).